Consider the following 256-residue polypeptide: Pyrroloquinoline-quinone synthase (256 aa).

Belongs to the PqqC family.

It catalyses the reaction 6-(2-amino-2-carboxyethyl)-7,8-dioxo-1,2,3,4,7,8-hexahydroquinoline-2,4-dicarboxylate + 3 O2 = pyrroloquinoline quinone + 2 H2O2 + 2 H2O + H(+). It participates in cofactor biosynthesis; pyrroloquinoline quinone biosynthesis. Functionally, ring cyclization and eight-electron oxidation of 3a-(2-amino-2-carboxyethyl)-4,5-dioxo-4,5,6,7,8,9-hexahydroquinoline-7,9-dicarboxylic-acid to PQQ. The chain is Pyrroloquinoline-quinone synthase from Rhizobium meliloti (strain 1021) (Ensifer meliloti).